The following is a 562-amino-acid chain: Actin-related protein 8 (562 aa).

248–251 contributes to the ATP binding site; it reads DVGD.

Belongs to the actin family. ARP8 subfamily. Component of the chromatin remodeling Ino80 complex. Exists as monomers and dimers, but the dimer is most probably the biologically relevant form required for stable interactions with histones that exploits the twofold symmetry of the nucleosome core.

The protein localises to the nucleus. Its function is as follows. Plays an important role in the functional organization of mitotic chromosomes. Exhibits low basal ATPase activity, and unable to polymerize. Functionally, proposed core component of the chromatin remodeling INO80 complex which is involved in transcriptional regulation, DNA replication and probably DNA repair. Strongly prefer nucleosomes and H3-H4 tetramers over H2A-H2B dimers, suggesting it may act as a nucleosome recognition module within the complex. The sequence is that of Actin-related protein 8 from Aedes aegypti (Yellowfever mosquito).